The following is a 215-amino-acid chain: Redox-sensing transcriptional repressor Rex (215 aa).

The segment at residues 18-57 (LYYRFLKNLHASGKQRVSSAELSDAVKVDSATIRRDFSYF) is a DNA-binding region (H-T-H motif). 92–97 (GVGNLG) contacts NAD(+).

It belongs to the transcriptional regulatory Rex family. Homodimer.

Its subcellular location is the cytoplasm. In terms of biological role, modulates transcription in response to changes in cellular NADH/NAD(+) redox state. This chain is Redox-sensing transcriptional repressor Rex, found in Bacillus licheniformis (strain ATCC 14580 / DSM 13 / JCM 2505 / CCUG 7422 / NBRC 12200 / NCIMB 9375 / NCTC 10341 / NRRL NRS-1264 / Gibson 46).